The sequence spans 842 residues: Alpha-glucan phosphorylase, H isozyme (842 aa).

Position 688 is an N6-(pyridoxal phosphate)lysine (Lys688).

Belongs to the glycogen phosphorylase family. Pyridoxal 5'-phosphate serves as cofactor.

The protein localises to the cytoplasm. The enzyme catalyses [(1-&gt;4)-alpha-D-glucosyl](n) + phosphate = [(1-&gt;4)-alpha-D-glucosyl](n-1) + alpha-D-glucose 1-phosphate. In terms of biological role, phosphorylase is an important allosteric enzyme in carbohydrate metabolism. Enzymes from different sources differ in their regulatory mechanisms and in their natural substrates. However, all known phosphorylases share catalytic and structural properties. The H isoform exhibits higher affinity for branched polyglucans such as soluble starch or glycogen. The protein is Alpha-glucan phosphorylase, H isozyme of Vicia faba (Broad bean).